Here is a 304-residue protein sequence, read N- to C-terminus: Ring-infected erythrocyte surface antigen (304 aa).

2 N-linked (GlcNAc...) asparagine glycosylation sites follow: Asn-18 and Asn-22. The segment covering 142 to 159 has biased composition (basic and acidic residues); that stretch reads EHDAEENVEHDAEENVEH. The segment at 142-304 is disordered; the sequence is EHDAEENVEH…EENVEEHNGI (163 aa). Residues 160 to 298 show a composition bias toward acidic residues; it reads DAEENAEENV…NVEEYDEENV (139 aa).

It localises to the cell membrane. Functionally, may disrupt the normal intermolecular interactions of the cytoplasmic domain of band 3 and thereby facilitate the invagination of the red cell membrane which is necessary for the formation of the parasitophorous vacuole. The sequence is that of Ring-infected erythrocyte surface antigen (RESA) from Plasmodium falciparum (isolate Palo Alto / Uganda).